We begin with the raw amino-acid sequence, 550 residues long: Arginine--tRNA ligase (550 aa).

Positions 130 to 140 match the 'HIGH' region motif; it reads ANPTGPIHIGG.

The protein belongs to the class-I aminoacyl-tRNA synthetase family. Monomer.

Its subcellular location is the cytoplasm. The catalysed reaction is tRNA(Arg) + L-arginine + ATP = L-arginyl-tRNA(Arg) + AMP + diphosphate. This is Arginine--tRNA ligase (argS) from Mycobacterium leprae (strain TN).